The primary structure comprises 417 residues: Adrenocortical dysplasia protein homolog (417 aa).

A PWI motif is present at residues 11–13; it reads PWI. Ser-25 is modified (phosphoserine). An interaction with POT1 region spans residues 156 to 245; sequence ESASSSAGLT…SSIDSSQKAQ (90 aa). 2 stretches are compositionally biased toward polar residues: residues 237–250 and 259–292; these read SIDS…NPAS and SGAS…TSPR. Residues 237-309 are disordered; that stretch reads SIDSSQKAQE…PCSSTPSSPL (73 aa). Residues 296-309 are compositionally biased toward low complexity; that stretch reads PSSTPCSSTPSSPL. Residues Ser-313 and Ser-317 each carry the phosphoserine modification. Residue Lys-348 forms a Glycyl lysine isopeptide (Lys-Gly) (interchain with G-Cter in SUMO2) linkage.

Component of the shelterin complex (telosome) composed of TERF1, TERF2, TINF2, TERF2IP ACD and POT1. Forms heterodimers with POT1. Identified in a complex with POT1 and single-stranded telomeric DNA. Interacts with STN1 and TINF2.

Its subcellular location is the nucleus. The protein localises to the chromosome. It localises to the telomere. Functionally, component of the shelterin complex (telosome) that is involved in the regulation of telomere length and protection. Shelterin associates with arrays of double-stranded TTAGGG repeats added by telomerase and protects chromosome ends. Without its protective activity, telomeres are no longer hidden from the DNA damage surveillance and chromosome ends are inappropriately processed by DNA repair pathways. Promotes binding of POT1 to single-stranded telomeric DNA. Modulates the inhibitory effects of POT1 on telomere elongation. The ACD-POT1 heterodimer enhances telomere elongation by recruiting telomerase to telomeres and increasing its processivity. May play a role in organogenesis. The chain is Adrenocortical dysplasia protein homolog from Rattus norvegicus (Rat).